The chain runs to 372 residues: Alanine dehydrogenase 1 (372 aa).

The active site involves histidine 94. An NAD(+)-binding site is contributed by 170–200 (TYVIFGGGVAATNAANVALGLNAKVIIIELN).

This sequence belongs to the AlaDH/PNT family.

The catalysed reaction is L-alanine + NAD(+) + H2O = pyruvate + NH4(+) + NADH + H(+). It participates in amino-acid degradation; L-alanine degradation via dehydrogenase pathway; NH(3) and pyruvate from L-alanine: step 1/1. In terms of biological role, may play a role in cell wall synthesis as L-alanine is an important constituent of the peptidoglycan layer. The polypeptide is Alanine dehydrogenase 1 (ald1) (Staphylococcus aureus (strain MRSA252)).